A 594-amino-acid chain; its full sequence is DNA ligase (594 aa).

NAD(+) is bound by residues 32–36 (DEEYD), 81–82 (SL), and E118. Residue K120 is the N6-AMP-lysine intermediate of the active site. NAD(+) is bound by residues R141, E181, K299, and K323. Zn(2+) contacts are provided by C417, C420, C436, and C442.

Belongs to the NAD-dependent DNA ligase family. LigA subfamily. It depends on Mg(2+) as a cofactor. Mn(2+) is required as a cofactor.

The catalysed reaction is NAD(+) + (deoxyribonucleotide)n-3'-hydroxyl + 5'-phospho-(deoxyribonucleotide)m = (deoxyribonucleotide)n+m + AMP + beta-nicotinamide D-nucleotide.. Its function is as follows. DNA ligase that catalyzes the formation of phosphodiester linkages between 5'-phosphoryl and 3'-hydroxyl groups in double-stranded DNA using NAD as a coenzyme and as the energy source for the reaction. It is essential for DNA replication and repair of damaged DNA. This is DNA ligase from Blochmanniella floridana.